The primary structure comprises 150 residues: Endoribonuclease YbeY (150 aa).

Zn(2+)-binding residues include His-116, His-120, and His-126.

It belongs to the endoribonuclease YbeY family. Zn(2+) is required as a cofactor.

It localises to the cytoplasm. Its function is as follows. Single strand-specific metallo-endoribonuclease involved in late-stage 70S ribosome quality control and in maturation of the 3' terminus of the 16S rRNA. The protein is Endoribonuclease YbeY of Mesomycoplasma hyopneumoniae (strain 232) (Mycoplasma hyopneumoniae).